Here is a 91-residue protein sequence, read N- to C-terminus: Small ribosomal subunit protein uS17 (91 aa).

Belongs to the universal ribosomal protein uS17 family. As to quaternary structure, part of the 30S ribosomal subunit.

Functionally, one of the primary rRNA binding proteins, it binds specifically to the 5'-end of 16S ribosomal RNA. This is Small ribosomal subunit protein uS17 from Salinispora arenicola (strain CNS-205).